Reading from the N-terminus, the 518-residue chain is Probable bifunctional methylthioribulose-1-phosphate dehydratase/enolase-phosphatase E1 (518 aa).

The methylthioribulose-1-phosphate dehydratase stretch occupies residues 1-242; it reads MACCGGGRGE…AIKLYQLGID (242 aa). Substrate is bound at residue Cys-114. Zn(2+)-binding residues include His-132 and His-134. Glu-157 serves as the catalytic Proton donor/acceptor; for methylthioribulose-1-phosphate dehydratase activity. His-207 is a Zn(2+) binding site. The enolase-phosphatase E1 stretch occupies residues 279–518; the sequence is VVLDIEGTTT…FRTIKSFSEI (240 aa). Mg(2+) is bound by residues Asp-282 and Glu-284. Substrate-binding positions include 417-418 and Lys-451; that span reads SS. Mg(2+) is bound at residue Asp-477.

In the N-terminal section; belongs to the aldolase class II family. MtnB subfamily. It in the C-terminal section; belongs to the HAD-like hydrolase superfamily. MasA/MtnC family. Zn(2+) serves as cofactor. Requires Mg(2+) as cofactor.

The catalysed reaction is 5-(methylsulfanyl)-D-ribulose 1-phosphate = 5-methylsulfanyl-2,3-dioxopentyl phosphate + H2O. It carries out the reaction 5-methylsulfanyl-2,3-dioxopentyl phosphate + H2O = 1,2-dihydroxy-5-(methylsulfanyl)pent-1-en-3-one + phosphate. It participates in amino-acid biosynthesis; L-methionine biosynthesis via salvage pathway; L-methionine from S-methyl-5-thio-alpha-D-ribose 1-phosphate: step 2/6. Its pathway is amino-acid biosynthesis; L-methionine biosynthesis via salvage pathway; L-methionine from S-methyl-5-thio-alpha-D-ribose 1-phosphate: step 3/6. It functions in the pathway amino-acid biosynthesis; L-methionine biosynthesis via salvage pathway; L-methionine from S-methyl-5-thio-alpha-D-ribose 1-phosphate: step 4/6. The protein is Probable bifunctional methylthioribulose-1-phosphate dehydratase/enolase-phosphatase E1 of Oryza sativa subsp. indica (Rice).